Consider the following 332-residue polypeptide: MSTTNILLLCGGGGDEHAISLLSANYFETSLATLPQFNVLRVELDVNGHYRTAAGESCELNSRRQIRFDADNRAPWEVDFAIPCIHGFPGETGDIQSYFELINLPYFGCKAEASRNCFNKITAKMWFSALNIPNTPYLFLNEMSDVSIEQATNALVNWGSIFVKAASQGSSVGCYRIDNQEDVASTLAQAFTYSDYVIVEKTISARELEVAVYEIDGEIVATVPGEVICSSNNFYTFDEKYAANSKAQTQVVADISKEVSDLIRQYAISAFKGMKLRHLSRIDFFLTDDGEVLLNEINTFPGLTPISMFPKMLQNHGHSFPDYLLSNINSTD.

One can recognise an ATP-grasp domain in the interval 124–329 (KMWFSALNIP…FPDYLLSNIN (206 aa)). Residue 154–209 (ALVNWGSIFVKAASQGSSVGCYRIDNQEDVASTLAQAFTYSDYVIVEKTISARELE) coordinates ATP. Residues Asp-283, Glu-296, and Asn-298 each contribute to the Mg(2+) site.

Belongs to the D-alanine--D-alanine ligase family. It depends on Mg(2+) as a cofactor. Requires Mn(2+) as cofactor.

It is found in the cytoplasm. The enzyme catalyses 2 D-alanine + ATP = D-alanyl-D-alanine + ADP + phosphate + H(+). It functions in the pathway cell wall biogenesis; peptidoglycan biosynthesis. Cell wall formation. The chain is D-alanine--D-alanine ligase from Shewanella piezotolerans (strain WP3 / JCM 13877).